The chain runs to 538 residues: Putative outer membrane porin BglH (538 aa).

The first 25 residues, 1–25 (MFRRNLITSAILLMAPLAFSAQSLA), serve as a signal peptide directing secretion. Residues 52–82 (KDEEKKKYTPATVNRSVSTNDQGYAANPFPT) form a disordered region. Polar residues predominate over residues 62-73 (ATVNRSVSTNDQ).

Belongs to the porin LamB (TC 1.B.3) family.

The protein resides in the cell outer membrane. In terms of biological role, may be a sugar porin with a broad carbohydrate specificity. In Escherichia coli O139:H28 (strain E24377A / ETEC), this protein is Putative outer membrane porin BglH (bglH).